Here is a 1259-residue protein sequence, read N- to C-terminus: Lysine-specific demethylase 2B (1259 aa).

Residues 147-315 (FSHTKLERVV…MQLRVFEIED (169 aa)) enclose the JmjC domain. Thr-208 provides a ligand contact to substrate. Fe cation-binding residues include His-211 and Asp-213. Substrate is bound at residue Lys-228. His-283 contributes to the Fe cation binding site. The span at 388–402 (EEKGNLVEKPSKQSG) shows a compositional bias: basic and acidic residues. Disordered stretches follow at residues 388–463 (EEKG…ATDM) and 536–562 (KPSK…SANR). Over residues 403–413 (DESSTTNSTHS) the composition is skewed to polar residues. Over residues 414-423 (NGKDAAEKKQ) the composition is skewed to basic and acidic residues. A compositionally biased stretch (polar residues) spans 426 to 437 (TLMQQLKRTLSN). A compositionally biased stretch (basic residues) spans 536–548 (KPSKNRAVGRPKG). The segment at 567-613 (ARRRRTRCRKCEACLRTECGECHFCKDMKKFGGPGRMKQSCIMRQCI) adopts a CXXC-type zinc-finger fold. Residues Cys-574, Cys-577, Cys-580, Cys-585, Cys-588, Cys-591, Cys-607, Cys-612, Cys-623, Cys-626, Cys-649, Cys-652, His-657, Cys-660, Cys-680, and Cys-683 each contribute to the Zn(2+) site. The PHD-type zinc-finger motif lies at 620–686 (TAVCLVCGEA…CWECPKCNHA (67 aa)). Basic and acidic residues-rich tracts occupy residues 729–763 (KKKV…EDGH) and 771–790 (EKPP…EEKL). Residues 729–958 (KKKVEREETP…PPPSLSPPKC (230 aa)) are disordered. Over residues 835–848 (SRSSSPTAGPSTEG) the composition is skewed to polar residues. Basic residues predominate over residues 854–863 (KKKIRRKRRV). The span at 864-877 (SNKELSKELSKELN) shows a compositional bias: basic and acidic residues. The stretch at 864-891 (SNKELSKELSKELNQEIQKTESSLASEN) forms a coiled coil. Residues 878–889 (QEIQKTESSLAS) are compositionally biased toward polar residues. Residues 890–908 (ENHHPIKSEPESDNEESKK) show a composition bias toward basic and acidic residues. In terms of domain architecture, F-box spans 985 to 1030 (AHVMQREVWMAIFSYLSHRDLCICMRICRTWNRWCCDKRLWTQIDL). 5 LRR repeats span residues 1056-1081 (WTNI…NLSG), 1082-1105 (CSWI…NVQW), 1145-1170 (GLDI…DLSY), 1171-1200 (CNHV…NLSD), and 1201-1225 (CNNV…DLRF).

This sequence belongs to the JHDM1 histone demethylase family. The cofactor is Fe(2+).

Its subcellular location is the nucleus. It localises to the nucleolus. The protein resides in the chromosome. The catalysed reaction is N(6),N(6)-dimethyl-L-lysyl(36)-[histone H3] + 2 2-oxoglutarate + 2 O2 = L-lysyl(36)-[histone H3] + 2 formaldehyde + 2 succinate + 2 CO2. With respect to regulation, histone demethylase activity is inhibited by fumarate. Functionally, histone demethylase that demethylates 'Lys-4' and 'Lys-36' of histone H3, thereby playing a central role in histone code. Preferentially demethylates trimethylated H3 'Lys-4' and dimethylated H3 'Lys-36' residue while it has weak or no activity for mono- and tri-methylated H3 'Lys-36'. Preferentially binds the transcribed region of ribosomal RNA and represses the transcription of ribosomal RNA genes which inhibits cell growth and proliferation. The protein is Lysine-specific demethylase 2B (kdm2b) of Xenopus laevis (African clawed frog).